We begin with the raw amino-acid sequence, 252 residues long: Phosphatidylserine decarboxylase proenzyme (252 aa).

The active-site Schiff-base intermediate with substrate; via pyruvic acid is the Ser-211. A Pyruvic acid (Ser); by autocatalysis modification is found at Ser-211.

It belongs to the phosphatidylserine decarboxylase family. PSD-A subfamily. As to quaternary structure, heterodimer of a large membrane-associated beta subunit and a small pyruvoyl-containing alpha subunit. Pyruvate serves as cofactor. Post-translationally, is synthesized initially as an inactive proenzyme. Formation of the active enzyme involves a self-maturation process in which the active site pyruvoyl group is generated from an internal serine residue via an autocatalytic post-translational modification. Two non-identical subunits are generated from the proenzyme in this reaction, and the pyruvate is formed at the N-terminus of the alpha chain, which is derived from the carboxyl end of the proenzyme. The post-translation cleavage follows an unusual pathway, termed non-hydrolytic serinolysis, in which the side chain hydroxyl group of the serine supplies its oxygen atom to form the C-terminus of the beta chain, while the remainder of the serine residue undergoes an oxidative deamination to produce ammonia and the pyruvoyl prosthetic group on the alpha chain.

It is found in the cell membrane. It catalyses the reaction a 1,2-diacyl-sn-glycero-3-phospho-L-serine + H(+) = a 1,2-diacyl-sn-glycero-3-phosphoethanolamine + CO2. Its pathway is phospholipid metabolism; phosphatidylethanolamine biosynthesis; phosphatidylethanolamine from CDP-diacylglycerol: step 2/2. Functionally, catalyzes the formation of phosphatidylethanolamine (PtdEtn) from phosphatidylserine (PtdSer). The protein is Phosphatidylserine decarboxylase proenzyme of Novosphingobium aromaticivorans (strain ATCC 700278 / DSM 12444 / CCUG 56034 / CIP 105152 / NBRC 16084 / F199).